Reading from the N-terminus, the 100-residue chain is NADH-quinone oxidoreductase subunit K (100 aa).

The next 3 helical transmembrane spans lie at 4 to 24 (ITYY…GVLV), 29 to 49 (LVVF…FVAF), and 63 to 83 (FFVI…VIAV).

This sequence belongs to the complex I subunit 4L family. In terms of assembly, NDH-1 is composed of 14 different subunits. Subunits NuoA, H, J, K, L, M, N constitute the membrane sector of the complex.

The protein localises to the cell inner membrane. It catalyses the reaction a quinone + NADH + 5 H(+)(in) = a quinol + NAD(+) + 4 H(+)(out). Its function is as follows. NDH-1 shuttles electrons from NADH, via FMN and iron-sulfur (Fe-S) centers, to quinones in the respiratory chain. The immediate electron acceptor for the enzyme in this species is believed to be ubiquinone. Couples the redox reaction to proton translocation (for every two electrons transferred, four hydrogen ions are translocated across the cytoplasmic membrane), and thus conserves the redox energy in a proton gradient. The polypeptide is NADH-quinone oxidoreductase subunit K (Myxococcus xanthus (strain DK1622)).